The sequence spans 306 residues: Homoserine O-acetyltransferase (306 aa).

C142 (acyl-thioester intermediate) is an active-site residue. The substrate site is built by K163 and S192. H235 acts as the Proton acceptor in catalysis. Residue E237 is part of the active site. R249 lines the substrate pocket.

The protein belongs to the MetA family.

It localises to the cytoplasm. It carries out the reaction L-homoserine + acetyl-CoA = O-acetyl-L-homoserine + CoA. Its pathway is amino-acid biosynthesis; L-methionine biosynthesis via de novo pathway; O-acetyl-L-homoserine from L-homoserine: step 1/1. Functionally, transfers an acetyl group from acetyl-CoA to L-homoserine, forming acetyl-L-homoserine. The protein is Homoserine O-acetyltransferase of Brucella abortus (strain S19).